Here is a 467-residue protein sequence, read N- to C-terminus: MGKTLAEKVWEAHIVRRGEGYEPDLLYIDLHLVHEVTSPQAFEGLRLAGRQVRRPDLTLATEDHNVPTTGIDLPIADPVSRTQVDTLRRNCEEFGIRLHPMGDAEQGIVHVVGPQLGLTQPGTTVVCGDSHTSTHGAFGALAFGIGTSEVEHVLATQTLPLRPFKTMAINIEGTLRPGVTSKDVILAVIAKIGTGGGQGYVLEYRGSAVEKMSMEARMTMCNMSIEAGARAGMIAPDETTFAYLQGRPHAPEGTEWDAAVEYWKTLRTDEDAEFDAEVTLDADELTPFVTWGTNPGQGLPLGARIPDPAAIADESERFATEKALDYMGLEAGTPLREVAVDTVFLGSCTNGRIEDLRAAADVLKGRKVASEVRMLVVPGSMRVRKQAEAEGLNEVFTAAGAEWRSAGCSMCLGMNPDQLTPGERSASTSNRNFEGRQGKGGRTHLVSPLVAAATAVRGTLSSPEDLD.

Residues C348, C408, and C411 each coordinate [4Fe-4S] cluster. The tract at residues 417–445 (DQLTPGERSASTSNRNFEGRQGKGGRTHL) is disordered.

Belongs to the aconitase/IPM isomerase family. LeuC type 1 subfamily. In terms of assembly, heterodimer of LeuC and LeuD. [4Fe-4S] cluster serves as cofactor.

The catalysed reaction is (2R,3S)-3-isopropylmalate = (2S)-2-isopropylmalate. Its pathway is amino-acid biosynthesis; L-leucine biosynthesis; L-leucine from 3-methyl-2-oxobutanoate: step 2/4. Functionally, catalyzes the isomerization between 2-isopropylmalate and 3-isopropylmalate, via the formation of 2-isopropylmaleate. The protein is 3-isopropylmalate dehydratase large subunit of Saccharopolyspora erythraea (strain ATCC 11635 / DSM 40517 / JCM 4748 / NBRC 13426 / NCIMB 8594 / NRRL 2338).